We begin with the raw amino-acid sequence, 107 residues long: UPF0145 protein Spro_1658 (107 aa).

This sequence belongs to the UPF0145 family.

The sequence is that of UPF0145 protein Spro_1658 from Serratia proteamaculans (strain 568).